A 462-amino-acid polypeptide reads, in one-letter code: MAVSLWQQCIGRLQDELSAQQFSMWIRPLQAEMDGDTLVLYAPNRFVLDWVRDKYINIINQFFTEQMGSNAPKLRFDIGSRPSARTVQPAPAAPRPTTGHTQTKARVGTAFNIQAEPMANANHRSNINPTYQFDNFVEGKSNQLGKAAAMQVAENPGGAYNPLFLYGGTGLGKTHLLHAVGNGIIKNNPNAKVVYMHSERFVQDMVKALQNNAIEEFKRYYRSVDALFIDDIQFFANKDRSQEEFFHTFNALLEGNHQIILTSDRYPKEIDGVEDRLKSRFGWGLTVAIEPPELETRVAILMRKAQESGINLPDEVAFFVAKRLRSNVRELEGALNRVIANANFTGRPITIDFVREALRDLLALQEKLVTIDNIQKTVAEYYKIKMADMLSKRRSRSVARPRQVAMALSKELTNQSLPEIGDAFGGRDHTTVLHACRKIAQLREESHDIKEDYANLIRTLSS.

The interval 1 to 84 (MAVSLWQQCI…RFDIGSRPSA (84 aa)) is domain I, interacts with DnaA modulators. The segment at 84–125 (ARTVQPAPAAPRPTTGHTQTKARVGTAFNIQAEPMANANHRS) is domain II. The tract at residues 126-342 (NINPTYQFDN…GALNRVIANA (217 aa)) is domain III, AAA+ region. 4 residues coordinate ATP: G170, G172, K173, and T174. Residues 343–462 (NFTGRPITID…YANLIRTLSS (120 aa)) form a domain IV, binds dsDNA region.

Belongs to the DnaA family. As to quaternary structure, oligomerizes as a right-handed, spiral filament on DNA at oriC.

The protein resides in the cytoplasm. Its function is as follows. Plays an essential role in the initiation and regulation of chromosomal replication. ATP-DnaA binds to the origin of replication (oriC) to initiate formation of the DNA replication initiation complex once per cell cycle. Binds the DnaA box (a 9 base pair repeat at the origin) and separates the double-stranded (ds)DNA. Forms a right-handed helical filament on oriC DNA; dsDNA binds to the exterior of the filament while single-stranded (ss)DNA is stabiized in the filament's interior. The ATP-DnaA-oriC complex binds and stabilizes one strand of the AT-rich DNA unwinding element (DUE), permitting loading of DNA polymerase. After initiation quickly degrades to an ADP-DnaA complex that is not apt for DNA replication. Binds acidic phospholipids. This chain is Chromosomal replication initiator protein DnaA, found in Shewanella denitrificans (strain OS217 / ATCC BAA-1090 / DSM 15013).